Consider the following 649-residue polypeptide: Acetyl-coenzyme A synthetase (649 aa).

Residues 198–201, Thr317, and Asn341 each bind CoA; that span reads RRGK. Residues 393–395, 417–422, Asp506, and Arg521 contribute to the ATP site; these read GEP and DTWWQT. Ser529 provides a ligand contact to CoA. Residue Arg532 coordinates ATP. Mg(2+) is bound by residues Val543, His545, and Val548. N6-acetyllysine is present on Lys612. Positions 625–649 are disordered; the sequence is QPVQGDTSTLEDPTVLERLQASPAL.

It belongs to the ATP-dependent AMP-binding enzyme family. Mg(2+) is required as a cofactor. Post-translationally, acetylated. Deacetylation by the SIR2-homolog deacetylase activates the enzyme.

The catalysed reaction is acetate + ATP + CoA = acetyl-CoA + AMP + diphosphate. Functionally, catalyzes the conversion of acetate into acetyl-CoA (AcCoA), an essential intermediate at the junction of anabolic and catabolic pathways. AcsA undergoes a two-step reaction. In the first half reaction, AcsA combines acetate with ATP to form acetyl-adenylate (AcAMP) intermediate. In the second half reaction, it can then transfer the acetyl group from AcAMP to the sulfhydryl group of CoA, forming the product AcCoA. The protein is Acetyl-coenzyme A synthetase of Deinococcus radiodurans (strain ATCC 13939 / DSM 20539 / JCM 16871 / CCUG 27074 / LMG 4051 / NBRC 15346 / NCIMB 9279 / VKM B-1422 / R1).